Consider the following 245-residue polypeptide: Glutathione S-transferase F4 (245 aa).

Residues 25–106 (AGYKVHGDPF…YIAYVHSSRG (82 aa)) enclose the GST N-terminal domain. Residues 35–36 (ST), 64–65 (HK), 77–78 (QV), and 90–91 (ES) contribute to the glutathione site. Residues 114–244 (SHETMATLTM…QEKSWFNKPR (131 aa)) form the GST C-terminal domain.

This sequence belongs to the GST superfamily. Phi family.

The protein resides in the cytoplasm. It localises to the cytosol. The enzyme catalyses RX + glutathione = an S-substituted glutathione + a halide anion + H(+). In terms of biological role, may be involved in the conjugation of reduced glutathione to a wide number of exogenous and endogenous hydrophobic electrophiles and have a detoxification role against certain herbicides. This is Glutathione S-transferase F4 (GSTF4) from Arabidopsis thaliana (Mouse-ear cress).